The chain runs to 489 residues: Putative L,D-transpeptidase HI_1667 (489 aa).

Residues 10–29 traverse the membrane as a helical segment; the sequence is LSLFALSLSMMMSGCVLVGL. Residues 254–433 enclose the L,D-TPase catalytic domain; it reads NGIFVNIPSY…ETRKNTVLAS (180 aa). His-384 functions as the Proton donor/acceptor in the catalytic mechanism. Cys-403 serves as the catalytic Nucleophile.

Belongs to the YkuD family.

The protein localises to the membrane. Its pathway is cell wall biogenesis; peptidoglycan biosynthesis. The polypeptide is Putative L,D-transpeptidase HI_1667 (Haemophilus influenzae (strain ATCC 51907 / DSM 11121 / KW20 / Rd)).